The following is a 474-amino-acid chain: Trifunctional enzyme subunit beta, mitochondrial (474 aa).

The N-terminal 33 residues, 1–33 (MTILTYPFKNLPTASKWALRFSIRPLSCSSQLR), are a transit peptide targeting the mitochondrion. Lys72 bears the N6-acetyllysine; alternate mark. Lys72 carries the N6-succinyllysine; alternate modification. Cys138 acts as the Acyl-thioester intermediate in catalysis. The stretch at 173 to 220 (IRHSRKMRKLMLDLNKAKSMGQRLSLISKFRFNFLAPELPAVSEFSTS) is an intramembrane region. Position 188 is an N6-acetyllysine; alternate (Lys188). At Lys188 the chain carries N6-succinyllysine; alternate. Lys190, Lys272, and Lys291 each carry N6-succinyllysine. Lys293 is subject to N6-acetyllysine; alternate. Residue Lys293 is modified to N6-succinyllysine; alternate. Lys298 is subject to N6-acetyllysine. Lys332 is modified (N6-acetyllysine; alternate). Lys332 carries the post-translational modification N6-succinyllysine; alternate. An N6-acetyllysine mark is found at Lys348 and Lys361. Cys458 (proton donor/acceptor) is an active-site residue.

It belongs to the thiolase-like superfamily. Thiolase family. As to quaternary structure, heterotetramer of 2 alpha/HADHA and 2 beta/HADHB subunits; forms the mitochondrial trifunctional enzyme. Also purified as higher order heterooligomers including a 4 alpha/HADHA and 4 beta/HADHB heterooligomer which physiological significance remains unclear. The mitochondrial trifunctional enzyme interacts with MTLN. Interacts with RSAD2/viperin.

It localises to the mitochondrion. Its subcellular location is the mitochondrion inner membrane. The protein resides in the mitochondrion outer membrane. It is found in the endoplasmic reticulum. The catalysed reaction is an acyl-CoA + acetyl-CoA = a 3-oxoacyl-CoA + CoA. It carries out the reaction butanoyl-CoA + acetyl-CoA = 3-oxohexanoyl-CoA + CoA. The enzyme catalyses hexanoyl-CoA + acetyl-CoA = 3-oxooctanoyl-CoA + CoA. It catalyses the reaction octanoyl-CoA + acetyl-CoA = 3-oxodecanoyl-CoA + CoA. The catalysed reaction is decanoyl-CoA + acetyl-CoA = 3-oxododecanoyl-CoA + CoA. It carries out the reaction dodecanoyl-CoA + acetyl-CoA = 3-oxotetradecanoyl-CoA + CoA. The enzyme catalyses tetradecanoyl-CoA + acetyl-CoA = 3-oxohexadecanoyl-CoA + CoA. The protein operates within lipid metabolism; fatty acid beta-oxidation. Mitochondrial trifunctional enzyme catalyzes the last three of the four reactions of the mitochondrial beta-oxidation pathway. The mitochondrial beta-oxidation pathway is the major energy-producing process in tissues and is performed through four consecutive reactions breaking down fatty acids into acetyl-CoA. Among the enzymes involved in this pathway, the trifunctional enzyme exhibits specificity for long-chain fatty acids. Mitochondrial trifunctional enzyme is a heterotetrameric complex composed of two proteins, the trifunctional enzyme subunit alpha/HADHA carries the 2,3-enoyl-CoA hydratase and the 3-hydroxyacyl-CoA dehydrogenase activities, while the trifunctional enzyme subunit beta/HADHB described here bears the 3-ketoacyl-CoA thiolase activity. The chain is Trifunctional enzyme subunit beta, mitochondrial (HADHB) from Homo sapiens (Human).